Here is an 80-residue protein sequence, read N- to C-terminus: ATP synthase subunit c (80 aa).

2 helical membrane-spanning segments follow: residues 11–31 and 54–74; these read IAATIMMGLAAIGAAIGIGIL and FIVMGLVDAIPMITVGLGLYI.

The protein belongs to the ATPase C chain family. F-type ATPases have 2 components, F(1) - the catalytic core - and F(0) - the membrane proton channel. F(1) has five subunits: alpha(3), beta(3), gamma(1), delta(1), epsilon(1). F(0) has three main subunits: a(1), b(2) and c(10-14). The alpha and beta chains form an alternating ring which encloses part of the gamma chain. F(1) is attached to F(0) by a central stalk formed by the gamma and epsilon chains, while a peripheral stalk is formed by the delta and b chains.

The protein localises to the cell membrane. Its function is as follows. F(1)F(0) ATP synthase produces ATP from ADP in the presence of a proton or sodium gradient. F-type ATPases consist of two structural domains, F(1) containing the extramembraneous catalytic core and F(0) containing the membrane proton channel, linked together by a central stalk and a peripheral stalk. During catalysis, ATP synthesis in the catalytic domain of F(1) is coupled via a rotary mechanism of the central stalk subunits to proton translocation. In terms of biological role, key component of the F(0) channel; it plays a direct role in translocation across the membrane. A homomeric c-ring of between 10-14 subunits forms the central stalk rotor element with the F(1) delta and epsilon subunits. The protein is ATP synthase subunit c of Baumannia cicadellinicola subsp. Homalodisca coagulata.